Reading from the N-terminus, the 183-residue chain is Capsid protein (183 aa).

The tract at residues 143 to 183 is disordered; sequence LPETAVVRRRGRSPRRRTPSPRRRRSQSPRRRRSQSPASQC. Residues 149-176 show a composition bias toward basic residues; sequence VRRRGRSPRRRTPSPRRRRSQSPRRRRS. A phosphoserine; by host mark is found at S155, S162, and S170. The 1; half-length repeat unit spans residues 155–161; the sequence is SPRRRTP. Residues 155–177 form a 3 X 8 AA repeats of S-P-R-R-R-[PR]-S-Q region; it reads SPRRRTPSPRRRRSQSPRRRRSQ. Residues 158–175 carry the Bipartite nuclear localization signal motif; it reads RRTPSPRRRRSQSPRRRR. Repeat copies occupy residues 162 to 169 and 170 to 177. The interval 177–183 is RNA binding; the sequence is QSPASQC.

The protein belongs to the orthohepadnavirus core antigen family. In terms of assembly, homodimerizes, then multimerizes. Interacts with cytosol exposed regions of viral L glycoprotein present in the reticulum-to-Golgi compartment. Interacts with human FLNB. Phosphorylated form interacts with host importin alpha; this interaction depends on the exposure of the NLS, which itself depends upon genome maturation and/or phosphorylation of the capsid protein. Interacts with host NUP153. Post-translationally, phosphorylated by host SRPK1, SRPK2, and maybe protein kinase C or GAPDH. Phosphorylation is critical for pregenomic RNA packaging. Protein kinase C phosphorylation is stimulated by HBx protein and may play a role in transport of the viral genome to the nucleus at the late step during the viral replication cycle.

It localises to the virion. The protein localises to the host cytoplasm. Functionally, self assembles to form an icosahedral capsid. Most capsids appear to be large particles with an icosahedral symmetry of T=4 and consist of 240 copies of capsid protein, though a fraction forms smaller T=3 particles consisting of 180 capsid proteins. Entering capsids are transported along microtubules to the nucleus. Phosphorylation of the capsid is thought to induce exposure of nuclear localization signal in the C-terminal portion of the capsid protein that allows binding to the nuclear pore complex via the importin (karyopherin-) alpha and beta. Capsids are imported in intact form through the nuclear pore into the nuclear basket, where it probably binds NUP153. Only capsids that contain the mature viral genome can release the viral DNA and capsid protein into the nucleoplasm. Immature capsids get stuck in the basket. Capsids encapsulate the pre-genomic RNA and the P protein. Pre-genomic RNA is reverse-transcribed into DNA while the capsid is still in the cytoplasm. The capsid can then either be directed to the nucleus, providing more genomes for transcription, or bud through the endoplasmic reticulum to provide new virions. The chain is Capsid protein from Gorilla gorilla (western gorilla).